We begin with the raw amino-acid sequence, 382 residues long: Alanine racemase (382 aa).

Catalysis depends on lysine 39, which acts as the Proton acceptor; specific for D-alanine. Position 39 is an N6-(pyridoxal phosphate)lysine (lysine 39). Substrate is bound at residue arginine 138. Tyrosine 265 functions as the Proton acceptor; specific for L-alanine in the catalytic mechanism. Residue methionine 312 participates in substrate binding.

It belongs to the alanine racemase family. It depends on pyridoxal 5'-phosphate as a cofactor.

It catalyses the reaction L-alanine = D-alanine. The protein operates within amino-acid biosynthesis; D-alanine biosynthesis; D-alanine from L-alanine: step 1/1. Its function is as follows. Catalyzes the interconversion of L-alanine and D-alanine. May also act on other amino acids. This chain is Alanine racemase (alr), found in Staphylococcus epidermidis (strain ATCC 35984 / DSM 28319 / BCRC 17069 / CCUG 31568 / BM 3577 / RP62A).